A 227-amino-acid chain; its full sequence is 7-cyano-7-deazaguanine synthase (227 aa).

11-21 (VSGGMDSAALL) provides a ligand contact to ATP. 4 residues coordinate Zn(2+): Cys-192, Cys-200, Cys-203, and Cys-206.

The protein belongs to the QueC family. Zn(2+) is required as a cofactor.

It carries out the reaction 7-carboxy-7-deazaguanine + NH4(+) + ATP = 7-cyano-7-deazaguanine + ADP + phosphate + H2O + H(+). Its pathway is purine metabolism; 7-cyano-7-deazaguanine biosynthesis. Its function is as follows. Catalyzes the ATP-dependent conversion of 7-carboxy-7-deazaguanine (CDG) to 7-cyano-7-deazaguanine (preQ(0)). The sequence is that of 7-cyano-7-deazaguanine synthase from Persephonella marina (strain DSM 14350 / EX-H1).